We begin with the raw amino-acid sequence, 853 residues long: DNA mismatch repair protein MutS (853 aa).

Gly614–Ser621 contacts ATP.

It belongs to the DNA mismatch repair MutS family.

Functionally, this protein is involved in the repair of mismatches in DNA. It is possible that it carries out the mismatch recognition step. This protein has a weak ATPase activity. The chain is DNA mismatch repair protein MutS from Escherichia fergusonii (strain ATCC 35469 / DSM 13698 / CCUG 18766 / IAM 14443 / JCM 21226 / LMG 7866 / NBRC 102419 / NCTC 12128 / CDC 0568-73).